Here is a 166-residue protein sequence, read N- to C-terminus: NAD(P)H-quinone oxidoreductase subunit I, chloroplastic (166 aa).

4Fe-4S ferredoxin-type domains lie at 55 to 84 and 95 to 124; these read GRIHFEFDKCIACEVCVRVCPIDLPVVDWK and LNYSIDFGICIFCGNCVEYCPTNCLSMTEE. Positions 64, 67, 70, 74, 104, 107, 110, and 114 each coordinate [4Fe-4S] cluster.

The protein belongs to the complex I 23 kDa subunit family. As to quaternary structure, NDH is composed of at least 16 different subunits, 5 of which are encoded in the nucleus. [4Fe-4S] cluster is required as a cofactor.

The protein resides in the plastid. Its subcellular location is the chloroplast thylakoid membrane. It carries out the reaction a plastoquinone + NADH + (n+1) H(+)(in) = a plastoquinol + NAD(+) + n H(+)(out). The catalysed reaction is a plastoquinone + NADPH + (n+1) H(+)(in) = a plastoquinol + NADP(+) + n H(+)(out). NDH shuttles electrons from NAD(P)H:plastoquinone, via FMN and iron-sulfur (Fe-S) centers, to quinones in the photosynthetic chain and possibly in a chloroplast respiratory chain. The immediate electron acceptor for the enzyme in this species is believed to be plastoquinone. Couples the redox reaction to proton translocation, and thus conserves the redox energy in a proton gradient. In Encelia californica (Bush sunflower), this protein is NAD(P)H-quinone oxidoreductase subunit I, chloroplastic.